The chain runs to 276 residues: Probable endonuclease 4 (276 aa).

Residues His-65, His-105, Glu-141, Asp-175, His-178, His-210, Asp-223, His-225, and Glu-255 each coordinate Zn(2+).

It belongs to the AP endonuclease 2 family. Zn(2+) is required as a cofactor.

It carries out the reaction Endonucleolytic cleavage to 5'-phosphooligonucleotide end-products.. Functionally, endonuclease IV plays a role in DNA repair. It cleaves phosphodiester bonds at apurinic or apyrimidinic (AP) sites, generating a 3'-hydroxyl group and a 5'-terminal sugar phosphate. This chain is Probable endonuclease 4, found in Symbiobacterium thermophilum (strain DSM 24528 / JCM 14929 / IAM 14863 / T).